A 393-amino-acid polypeptide reads, in one-letter code: Bone morphogenetic protein 15 (393 aa).

Residues 1 to 25 (MVLLSILRILLWGLVLFMEHRVQMT) form the signal peptide. A propeptide spanning residues 26 to 268 (QVGQPSIAHL…DPSLLLRRAR (243 aa)) is cleaved from the precursor. N86 and N237 each carry an N-linked (GlcNAc...) asparagine glycan. 3 disulfides stabilise this stretch: C292–C358, C321–C390, and C325–C392. N-linked (GlcNAc...) asparagine glycosylation is present at N374.

This sequence belongs to the TGF-beta family. Homodimer. But, in contrast to other members of this family, cannot be disulfide-linked.

It localises to the secreted. In terms of biological role, may be involved in follicular development. Oocyte-specific growth/differentiation factor that stimulates folliculogenesis and granulosa cell (GC) growth. This chain is Bone morphogenetic protein 15 (BMP15), found in Ovis aries (Sheep).